The following is a 499-amino-acid chain: Bifunctional purine biosynthesis protein PurH (499 aa).

Residues 1–144 (MIKRALISVF…KNFKDVVVLT (144 aa)) form the MGS-like domain.

This sequence belongs to the PurH family.

The catalysed reaction is (6R)-10-formyltetrahydrofolate + 5-amino-1-(5-phospho-beta-D-ribosyl)imidazole-4-carboxamide = 5-formamido-1-(5-phospho-D-ribosyl)imidazole-4-carboxamide + (6S)-5,6,7,8-tetrahydrofolate. The enzyme catalyses IMP + H2O = 5-formamido-1-(5-phospho-D-ribosyl)imidazole-4-carboxamide. It participates in purine metabolism; IMP biosynthesis via de novo pathway; 5-formamido-1-(5-phospho-D-ribosyl)imidazole-4-carboxamide from 5-amino-1-(5-phospho-D-ribosyl)imidazole-4-carboxamide (10-formyl THF route): step 1/1. Its pathway is purine metabolism; IMP biosynthesis via de novo pathway; IMP from 5-formamido-1-(5-phospho-D-ribosyl)imidazole-4-carboxamide: step 1/1. This chain is Bifunctional purine biosynthesis protein PurH, found in Clostridium botulinum (strain 657 / Type Ba4).